The following is a 491-amino-acid chain: Ketol-acid reductoisomerase (NADP(+)) (491 aa).

Residues 15-208 (AQLGKCRFMG…GGHRAGVLES (194 aa)) form the KARI N-terminal Rossmann domain. Residues 45 to 48 (CGAQ), arginine 68, arginine 76, serine 78, and 108 to 110 (DKQ) contribute to the NADP(+) site. Residue histidine 132 is part of the active site. Glycine 158 contacts NADP(+). 2 consecutive KARI C-terminal knotted domains span residues 209 to 344 (SFVA…TAPQ) and 345 to 484 (FEGK…MTDM). Positions 217, 221, 389, and 393 each coordinate Mg(2+). A substrate-binding site is contributed by serine 414.

Belongs to the ketol-acid reductoisomerase family. Requires Mg(2+) as cofactor.

The enzyme catalyses (2R)-2,3-dihydroxy-3-methylbutanoate + NADP(+) = (2S)-2-acetolactate + NADPH + H(+). It catalyses the reaction (2R,3R)-2,3-dihydroxy-3-methylpentanoate + NADP(+) = (S)-2-ethyl-2-hydroxy-3-oxobutanoate + NADPH + H(+). It participates in amino-acid biosynthesis; L-isoleucine biosynthesis; L-isoleucine from 2-oxobutanoate: step 2/4. It functions in the pathway amino-acid biosynthesis; L-valine biosynthesis; L-valine from pyruvate: step 2/4. Involved in the biosynthesis of branched-chain amino acids (BCAA). Catalyzes an alkyl-migration followed by a ketol-acid reduction of (S)-2-acetolactate (S2AL) to yield (R)-2,3-dihydroxy-isovalerate. In the isomerase reaction, S2AL is rearranged via a Mg-dependent methyl migration to produce 3-hydroxy-3-methyl-2-ketobutyrate (HMKB). In the reductase reaction, this 2-ketoacid undergoes a metal-dependent reduction by NADPH to yield (R)-2,3-dihydroxy-isovalerate. The protein is Ketol-acid reductoisomerase (NADP(+)) of Salmonella agona (strain SL483).